The primary structure comprises 421 residues: Testin (421 aa).

The region spanning 92-199 is the PET domain; the sequence is MILTNPVAAK…GDVKLPCEMD (108 aa). The tract at residues 133–164 is disordered; sequence EKQPVAGSEGAQYRKKQLAKQLPAHDQDPSKC. The segment covering 155–164 has biased composition (basic and acidic residues); sequence PAHDQDPSKC. LIM zinc-binding domains follow at residues 234-297, 299-359, and 362-421; these read YSCY…CDSE, PRCA…NHAV, and QGCH…KMMS.

This sequence belongs to the prickle / espinas / testin family. In terms of assembly, interacts via LIM domain 1 with ZYX. Interacts (via LIM domain 3) with ENAH and VASP. Interacts with ALKBH4, talin, actin, alpha-actinin, GRIP1 and PXN. Interacts (via LIM domain 2) with ACTL7A (via N-terminus). Heterodimer with ACTL7A; the heterodimer interacts with ENAH to form a heterotrimer.

The protein localises to the cytoplasm. The protein resides in the cell junction. Its subcellular location is the focal adhesion. In terms of biological role, scaffold protein that may play a role in cell adhesion, cell spreading and in the reorganization of the actin cytoskeleton. Plays a role in the regulation of cell proliferation. May act as a tumor suppressor. The protein is Testin (TES) of Aotus nancymaae (Ma's night monkey).